The sequence spans 497 residues: MELVVKSVAAASVKTATLVIPVGENRKLGAVAKAVDLASEGAISAVLKRGDLAGKPGQTLLLQNLQGLKAERVLLVGSGKDEALGDRTWRKLVASVAGVLKGLNGADAVLALDDVAVNNRDAHYGKYRLLAETLLDGEYVFDRFKSQKVEPRALKKVTLLADKAGQAEVERAVKHASAIATGMAFTRDLGNLPPNLCHPSFLAEQAKELGKAHKALKVEVLDEKKIKDLGMGAFYAVGQGSDQPPRLIVLNYQGGKKADKPFVLVGKGITFDTGGISLKPGAGMDEMKYDMCGAASVFGTLRAVLELQLPVNLVCLLACAENMPSGGATRPGDIVTTMSGQTVEILNTDAEGRLVLCDTLTYAERFKPQAVIDIATLTGACIVALGSHTTGLMGNNDDLVGQLLDAGKRADDRAWQLPLFDEYQEQLDSPFADMGNIGGPKAGTITAGCFLSRFAKAYNWAHMDIAGTAWISGGKDKGATGRPVPLLTQYLLDRAGA.

Residues lysine 267 and aspartate 272 each coordinate Mn(2+). Residue lysine 279 is part of the active site. Residues aspartate 290, aspartate 349, and glutamate 351 each coordinate Mn(2+). Arginine 353 is an active-site residue.

The protein belongs to the peptidase M17 family. Mn(2+) is required as a cofactor.

The protein resides in the cytoplasm. It carries out the reaction Release of an N-terminal amino acid, Xaa-|-Yaa-, in which Xaa is preferably Leu, but may be other amino acids including Pro although not Arg or Lys, and Yaa may be Pro. Amino acid amides and methyl esters are also readily hydrolyzed, but rates on arylamides are exceedingly low.. The catalysed reaction is Release of an N-terminal amino acid, preferentially leucine, but not glutamic or aspartic acids.. In terms of biological role, presumably involved in the processing and regular turnover of intracellular proteins. Catalyzes the removal of unsubstituted N-terminal amino acids from various peptides. This Pseudomonas putida (Arthrobacter siderocapsulatus) protein is Cytosol aminopeptidase (pepA).